The primary structure comprises 655 residues: Protein movement modulator (655 aa).

At 1-54 (MEQPSILVKILHSIPHVNYTFRRVNDTFNPDSDVYLEPTNNKLQCQQKGIELQS) the chain is on the extracellular side. 2 N-linked (GlcNAc...) asparagine glycosylation sites follow: Asn18 and Asn25. A helical membrane pass occupies residues 55–75 (LVILASIPAGLLIGSLLGLLL). Topologically, residues 76-95 (YLLTRCCDRRQRKPSAQRCQ) are cytoplasmic. The chain crosses the membrane as a helical span at residues 96–116 (SCSLVIITLMTCAAIGLGLYG). At 117–231 (NDDFHNGLLQ…GEFYESIRWP (115 aa)) the chain is on the extracellular side. N-linked (GlcNAc...) asparagine glycosylation is found at Asn171, Asn188, and Asn211. A helical transmembrane segment spans residues 232 to 252 (ATLAFLTVLLLLCTVLVIGVA). Topologically, residues 253–258 (RRSRCT) are cytoplasmic. The chain crosses the membrane as a helical span at residues 259–279 (LIFFSVSGLFCIIICWLLAGV). The Extracellular portion of the chain corresponds to 280-401 (YLASSVAAGD…ALRGLCGGGL (122 aa)). Residues Asn326 and Asn372 are each glycosylated (N-linked (GlcNAc...) asparagine). Residues 402–422 (LGLSLMMVAGLLTSFLLTILV) traverse the membrane as a helical segment. The Cytoplasmic portion of the chain corresponds to 423–655 (YADSHAWIYL…CKTLESNDFY (233 aa)). The segment at 446–576 (APLFPASNAP…NNHYNNTQHR (131 aa)) is disordered. The segment covering 450-464 (PASNAPSASISPTAP) has biased composition (low complexity). The span at 465–480 (LSTGTINRTLLHHQQA) shows a compositional bias: polar residues. Gly residues predominate over residues 482 to 509 (SGGGSGTLPGSGGGAGAGGGVGANGHNG). 2 stretches are compositionally biased toward low complexity: residues 526 to 539 (SPSS…STAT) and 546 to 576 (SYHN…TQHR). Ser597 and Ser599 each carry phosphoserine.

Belongs to the tweety family.

The protein localises to the cell membrane. The enzyme catalyses chloride(in) = chloride(out). Probable large-conductance Ca(2+)-activated chloride channel. Modulator of embryonic movement. The sequence is that of Protein movement modulator from Drosophila melanogaster (Fruit fly).